Consider the following 410-residue polypeptide: Gamma-glutamyl phosphate reductase (410 aa).

It belongs to the gamma-glutamyl phosphate reductase family.

The protein localises to the cytoplasm. The enzyme catalyses L-glutamate 5-semialdehyde + phosphate + NADP(+) = L-glutamyl 5-phosphate + NADPH + H(+). It functions in the pathway amino-acid biosynthesis; L-proline biosynthesis; L-glutamate 5-semialdehyde from L-glutamate: step 2/2. Functionally, catalyzes the NADPH-dependent reduction of L-glutamate 5-phosphate into L-glutamate 5-semialdehyde and phosphate. The product spontaneously undergoes cyclization to form 1-pyrroline-5-carboxylate. The protein is Gamma-glutamyl phosphate reductase of Campylobacter jejuni subsp. jejuni serotype O:2 (strain ATCC 700819 / NCTC 11168).